A 173-amino-acid chain; its full sequence is Probable capsid assembly scaffolding protein (173 aa).

The span at 1-13 shows a compositional bias: low complexity; that stretch reads MSDNPTPESTPEA. The interval 1-27 is disordered; it reads MSDNPTPESTPEAETPEVEKPMEPQGK. Positions 36 to 84 form a coiled coil; that stretch reads SLRQEAAAARVAKKDAVEAAEARVKAEYEAKLAERDTAYTELQNQLGQA. Residues 134–158 form a disordered region; sequence GNKTPSPAFDPSQGRGGKPPIPLNG.

This sequence belongs to the L5likevirus scaffolding protein family.

Functionally, scaffolding protein involved in the icosahedric procapsid assembly. Coassembles with the capsid proteins to form the procapsid, in which the scaffolding protein is found within the external shell of icosahedrally arranged capsid protein subunits. The chain is Probable capsid assembly scaffolding protein (16) from Mycobacterium (Mycobacteriophage L5).